Consider the following 216-residue polypeptide: UPF0502 protein Smal_0052 (216 aa).

Belongs to the UPF0502 family.

The chain is UPF0502 protein Smal_0052 from Stenotrophomonas maltophilia (strain R551-3).